The primary structure comprises 415 residues: Pectin acetylesterase 12 (415 aa).

A signal peptide spans 1-20; sequence MVKLLLVGFVVAGIILGTQA. Asparagine 27 carries N-linked (GlcNAc...) asparagine glycosylation. Catalysis depends on charge relay system residues serine 197, aspartate 293, and histidine 360.

Belongs to the pectinacetylesterase family.

It localises to the secreted. Its subcellular location is the cell wall. In terms of biological role, hydrolyzes acetyl esters in homogalacturonan regions of pectin. In type I primary cell wall, galacturonic acid residues of pectin can be acetylated at the O-2 and O-3 positions. Decreasing the degree of acetylation of pectin gels in vitro alters their physical properties. The chain is Pectin acetylesterase 12 from Arabidopsis thaliana (Mouse-ear cress).